The primary structure comprises 298 residues: Acetylglutamate kinase (298 aa).

Residues 69–70, Arg91, and Asn191 contribute to the substrate site; that span reads GG.

This sequence belongs to the acetylglutamate kinase family. ArgB subfamily.

It is found in the cytoplasm. The enzyme catalyses N-acetyl-L-glutamate + ATP = N-acetyl-L-glutamyl 5-phosphate + ADP. It functions in the pathway amino-acid biosynthesis; L-arginine biosynthesis; N(2)-acetyl-L-ornithine from L-glutamate: step 2/4. Catalyzes the ATP-dependent phosphorylation of N-acetyl-L-glutamate. This chain is Acetylglutamate kinase, found in Neisseria meningitidis serogroup C (strain 053442).